Reading from the N-terminus, the 962-residue chain is Protease 3 (962 aa).

The N-terminal stretch at 1-23 (MPRSTWFKALLLLVALWGPAVQA) is a signal peptide. Residue histidine 88 coordinates Zn(2+). Catalysis depends on glutamate 91, which acts as the Proton acceptor. The Zn(2+) site is built by histidine 92 and glutamate 169.

It belongs to the peptidase M16 family. In terms of assembly, monomer. Requires Zn(2+) as cofactor.

Its subcellular location is the periplasm. The catalysed reaction is Preferential cleavage of 16-Tyr-|-Leu-17 and 25-Phe-|-Tyr-26 bonds of oxidized insulin B chain. Also acts on other substrates of Mw less than 7 kDa such as insulin and glucagon.. Endopeptidase that degrades small peptides of less than 7 kDa, such as glucagon and insulin. This is Protease 3 (ptrA) from Salmonella typhimurium (strain LT2 / SGSC1412 / ATCC 700720).